Reading from the N-terminus, the 202-residue chain is Glycerol-3-phosphate acyltransferase (202 aa).

The next 4 helical transmembrane spans lie at 11–31 (ALIA…GLIL), 87–107 (PALA…WLGF), 116–136 (FIGV…AIWL), and 158–178 (VILW…LAAL).

It belongs to the PlsY family. In terms of assembly, probably interacts with PlsX.

It localises to the cell inner membrane. The catalysed reaction is an acyl phosphate + sn-glycerol 3-phosphate = a 1-acyl-sn-glycero-3-phosphate + phosphate. The protein operates within lipid metabolism; phospholipid metabolism. Catalyzes the transfer of an acyl group from acyl-phosphate (acyl-PO(4)) to glycerol-3-phosphate (G3P) to form lysophosphatidic acid (LPA). This enzyme utilizes acyl-phosphate as fatty acyl donor, but not acyl-CoA or acyl-ACP. The protein is Glycerol-3-phosphate acyltransferase of Methylorubrum populi (strain ATCC BAA-705 / NCIMB 13946 / BJ001) (Methylobacterium populi).